The chain runs to 433 residues: Legumain (433 aa).

Positions 1-17 are cleaved as a signal peptide; it reads MVWKVAVFLSAALVIGA. Residue N91 is glycosylated (N-linked (GlcNAc...) asparagine). H148 is an active-site residue. N167 carries N-linked (GlcNAc...) asparagine glycosylation. C189 acts as the Nucleophile in catalysis. N263 and N272 each carry an N-linked (GlcNAc...) asparagine glycan. The propeptide occupies 324–433; sequence DLEESRQLTE…SMDHVCLGHY (110 aa). Cystine bridges form between C378–C412 and C390–C429.

It belongs to the peptidase C13 family. In terms of assembly, homodimer before autocatalytic removal of the propeptide. Monomer after autocatalytic processing. May interact with integrins. In terms of processing, activated by autocatalytic processing at pH 4.

The protein localises to the lysosome. The enzyme catalyses Hydrolysis of proteins and small molecule substrates at -Asn-|-Xaa- bonds.. Its function is as follows. Has a strict specificity for hydrolysis of asparaginyl bonds. Can also cleave aspartyl bonds slowly, especially under acidic conditions. Involved in the processing of proteins for MHC class II antigen presentation in the lysosomal/endosomal system. Also involved in MHC class I antigen presentation in cross-presenting dendritic cells by mediating cleavage and maturation of Perforin-2 (MPEG1), thereby promoting antigen translocation in the cytosol. Required for normal lysosomal protein degradation in renal proximal tubules. Required for normal degradation of internalized EGFR. Plays a role in the regulation of cell proliferation via its role in EGFR degradation. The chain is Legumain (LGMN) from Pongo abelii (Sumatran orangutan).